Reading from the N-terminus, the 296-residue chain is Large ribosomal subunit protein uL15m (296 aa).

The N-terminal 20 residues, 1-20 (MSLIKKPGGKTIEVVKNLPR), are a transit peptide targeting the mitochondrion. The tract at residues 25–59 (NLRPNPGAKTLEKRRGRGMHGGNRSGWGHKGERQR) is disordered.

It belongs to the universal ribosomal protein uL15 family. Component of the mitochondrial ribosome large subunit (39S) which comprises a 16S rRNA and about 50 distinct proteins.

It is found in the mitochondrion. The chain is Large ribosomal subunit protein uL15m (mrpl15) from Danio rerio (Zebrafish).